A 288-amino-acid polypeptide reads, in one-letter code: Small ribosomal subunit protein uS9m (288 aa).

Residues 269–288 (VERKKPGKKKARKMPTWVKR) form a disordered region.

The protein belongs to the universal ribosomal protein uS9 family.

It localises to the mitochondrion. This chain is Small ribosomal subunit protein uS9m (MRPS9), found in Candida glabrata (strain ATCC 2001 / BCRC 20586 / JCM 3761 / NBRC 0622 / NRRL Y-65 / CBS 138) (Yeast).